The sequence spans 226 residues: Phosphoglycolate phosphatase (226 aa).

Residue D9 is the Nucleophile of the active site. Positions 9 and 11 each coordinate Mg(2+). Residue K150 coordinates substrate. Residues D173 and D177 each coordinate Mg(2+).

Belongs to the archaeal SPP-like hydrolase family. Mg(2+) serves as cofactor.

It catalyses the reaction 2-phosphoglycolate + H2O = glycolate + phosphate. Its function is as follows. Catalyzes the dephosphorylation of 2-phosphoglycolate. This Methanococcoides burtonii (strain DSM 6242 / NBRC 107633 / OCM 468 / ACE-M) protein is Phosphoglycolate phosphatase.